A 236-amino-acid polypeptide reads, in one-letter code: Ribosome assembly factor mrt4 (236 aa).

It belongs to the universal ribosomal protein uL10 family. As to quaternary structure, associates with the pre-60S ribosomal particle.

The protein resides in the nucleus. Its subcellular location is the nucleolus. The protein localises to the cytoplasm. In terms of biological role, component of the ribosome assembly machinery. Nuclear paralog of the ribosomal protein P0, it binds pre-60S subunits at an early stage of assembly in the nucleolus, and is replaced by P0 in cytoplasmic pre-60S subunits and mature 80S ribosomes. The sequence is that of Ribosome assembly factor mrt4 from Eremothecium gossypii (strain ATCC 10895 / CBS 109.51 / FGSC 9923 / NRRL Y-1056) (Yeast).